Here is a 32-residue protein sequence, read N- to C-terminus: Photosystem II reaction center protein T (32 aa).

Residues 3–23 (ALVYTFLLIGTLMVIFFAVFF) traverse the membrane as a helical segment.

The protein belongs to the PsbT family. As to quaternary structure, PSII is composed of 1 copy each of membrane proteins PsbA, PsbB, PsbC, PsbD, PsbE, PsbF, PsbH, PsbI, PsbJ, PsbK, PsbL, PsbM, PsbT, PsbX, PsbY, PsbZ, Psb30/Ycf12, at least 3 peripheral proteins of the oxygen-evolving complex and a large number of cofactors. It forms dimeric complexes.

The protein localises to the plastid. The protein resides in the chloroplast thylakoid membrane. Functionally, found at the monomer-monomer interface of the photosystem II (PS II) dimer, plays a role in assembly and dimerization of PSII. PSII is a light-driven water plastoquinone oxidoreductase, using light energy to abstract electrons from H(2)O, generating a proton gradient subsequently used for ATP formation. The polypeptide is Photosystem II reaction center protein T (Thalassiosira pseudonana (Marine diatom)).